The primary structure comprises 305 residues: tRNA-cytidine(32) 2-sulfurtransferase (305 aa).

The tract at residues 1–20 is disordered; it reads MTAVLPLPQPLADPAPRDPR. Positions 59-64 match the PP-loop motif motif; that stretch reads SGGKDS. Residues Cys134, Cys137, and Cys225 each coordinate [4Fe-4S] cluster. Positions 282-305 are disordered; it reads DAPSGLDPDPRAWLSAGHATHDSD.

This sequence belongs to the TtcA family. In terms of assembly, homodimer. Requires Mg(2+) as cofactor. The cofactor is [4Fe-4S] cluster.

The protein localises to the cytoplasm. The catalysed reaction is cytidine(32) in tRNA + S-sulfanyl-L-cysteinyl-[cysteine desulfurase] + AH2 + ATP = 2-thiocytidine(32) in tRNA + L-cysteinyl-[cysteine desulfurase] + A + AMP + diphosphate + H(+). Its pathway is tRNA modification. Catalyzes the ATP-dependent 2-thiolation of cytidine in position 32 of tRNA, to form 2-thiocytidine (s(2)C32). The sulfur atoms are provided by the cysteine/cysteine desulfurase (IscS) system. This is tRNA-cytidine(32) 2-sulfurtransferase from Xanthomonas axonopodis pv. citri (strain 306).